A 611-amino-acid polypeptide reads, in one-letter code: Serine/arginine repetitive matrix protein 4 (611 aa).

Disordered stretches follow at residues 38-248 (ARKP…PLQM) and 263-611 (SAAD…STRR). 2 stretches are compositionally biased toward basic residues: residues 107 to 123 (RGKK…RRRS) and 131 to 189 (VKKK…HRCP). Residues 190-202 (SRSQSSESRPSSC) show a composition bias toward low complexity. Over residues 203–216 (ESRHRGRSPEEGQK) the composition is skewed to basic and acidic residues. Positions 217–226 (SRRRHSRRCS) are enriched in basic residues. Residues 270 to 290 (KTASPLTTSRGRSQEYDSGND) show a composition bias toward polar residues. Residues 291–301 (TSSPPSTQTSS) show a composition bias toward low complexity. The span at 322-341 (LNSGNTSDSGNSFTTSSPQN) shows a compositional bias: polar residues. Composition is skewed to low complexity over residues 390–422 (SRSS…SRST) and 430–461 (SRSP…SRYS). Residues 462 to 482 (PSRERDPKYSEKDSQQRERER) are compositionally biased toward basic and acidic residues. The span at 483–498 (ARRRRRSYSPMRKRRR) shows a compositional bias: basic residues. Positions 499 to 508 (DSPSHLEARR) are enriched in basic and acidic residues. Low complexity predominate over residues 522–549 (PSPSSSGSLSSTSSWYSSSSSRSASRSY). Basic residues predominate over residues 550 to 564 (SRSRSRSRSRRRSRT). Low complexity predominate over residues 565–580 (RTSSSSSSRSPSPGSR). The segment covering 581–595 (SRSRSRSRSRSRSRS) has biased composition (basic residues). Positions 596–611 (QSRSYSSADSYSSTRR) are enriched in low complexity.

This sequence belongs to the nSR100 family. Phosphorylated. Specifically expressed in neuronal cells (at protein level). Expressed in the cerebellum.

Its subcellular location is the nucleus. Its function is as follows. Splicing factor specifically required for neural cell differentiation. Acts in conjunction with nPTB/PTBP2 by binding directly to its regulated target transcripts and promotes neural-specific exon inclusion in many genes that function in neural cell differentiation. Required to promote the inclusion of neural-specific exon 10 in nPTB/PTBP2, leading to increased expression of neural-specific nPTB/PTBP2. Also promotes the inclusion of exon 16 in DAAM1 in neuron extracts. Promotes alternative splicing of REST transcripts to produce REST isoform 3 (REST4) with greatly reduced repressive activity, thereby activating expression of REST targets in neural cells. Plays an important role during embryonic development as well as in the proper functioning of the adult nervous system. Regulates alternative splicing events in genes with important neuronal functions. This is Serine/arginine repetitive matrix protein 4 (SRRM4) from Homo sapiens (Human).